A 371-amino-acid chain; its full sequence is MGEGDAIWAPPILPHSTLGTLSHHPELHFGGKMESKVSEGGLNVTLTIRLLMHGKEVGSIIGKKGETVKKMREESGARINISEGNCPERIVTITGPTDAIFKAFAMIAYKFEEDIINSMSNSPATSKPPVTLRLVVPASQCGSLIGKGGSKIKEIRESTGAQVQVAGDMLPNSTERAVTISGTPDAIIQCVKQICVVMLESPPKGATIPYRPKPASTPVIFAGGQAYTIQGQYAIPHPDQLTKLHQLAMQQTPFPPLGQTNPAFPGEKLPLHSSEEAQNLMGQSSGLDASPPASTHELTIPNDLIGCIIGRQGTKINEIRQMSGAQIKIANATEGSSERQITITGTPANISLAQYLINARLTSEVTGMGAL.

KH domains follow at residues 45 to 95 (TLTI…TITG), 129 to 182 (PVTL…TISG), and 293 to 357 (ASTH…QYLI).

Widely expressed, with highest levels in testis and fat tissues and lowest in heart.

The protein localises to the cytoplasm. Its function is as follows. Single-stranded nucleic acid binding protein that binds preferentially to oligo dC. The chain is Poly(rC)-binding protein 3 (Pcbp3) from Mus musculus (Mouse).